We begin with the raw amino-acid sequence, 240 residues long: 4-hydroxy-tetrahydrodipicolinate reductase (240 aa).

Residues A79 to T81 and S103 to M106 contribute to the NAD(+) site. Catalysis depends on H135, which acts as the Proton donor/acceptor. H136 contributes to the (S)-2,3,4,5-tetrahydrodipicolinate binding site. K139 (proton donor) is an active-site residue. Position 145–146 (G145–T146) interacts with (S)-2,3,4,5-tetrahydrodipicolinate.

Belongs to the DapB family.

The protein localises to the cytoplasm. It catalyses the reaction (S)-2,3,4,5-tetrahydrodipicolinate + NAD(+) + H2O = (2S,4S)-4-hydroxy-2,3,4,5-tetrahydrodipicolinate + NADH + H(+). The catalysed reaction is (S)-2,3,4,5-tetrahydrodipicolinate + NADP(+) + H2O = (2S,4S)-4-hydroxy-2,3,4,5-tetrahydrodipicolinate + NADPH + H(+). It functions in the pathway amino-acid biosynthesis; L-lysine biosynthesis via DAP pathway; (S)-tetrahydrodipicolinate from L-aspartate: step 4/4. In terms of biological role, catalyzes the conversion of 4-hydroxy-tetrahydrodipicolinate (HTPA) to tetrahydrodipicolinate. This Staphylococcus epidermidis (strain ATCC 12228 / FDA PCI 1200) protein is 4-hydroxy-tetrahydrodipicolinate reductase.